The following is a 458-amino-acid chain: tRNA modification GTPase MnmE (458 aa).

(6S)-5-formyl-5,6,7,8-tetrahydrofolate contacts are provided by Arg-30, Glu-90, and Lys-129. In terms of domain architecture, TrmE-type G spans 225-379; sequence GLSICLIGCP…LHQTIDTIIW (155 aa). Asn-235 contacts K(+). GTP-binding positions include 235–240, 254–260, and 279–282; these read NVGKSS, SPIPGTT, and DTAG. A Mg(2+)-binding site is contributed by Ser-239. The K(+) site is built by Ser-254, Ile-256, and Thr-259. A Mg(2+)-binding site is contributed by Thr-260. Residue Lys-458 coordinates (6S)-5-formyl-5,6,7,8-tetrahydrofolate.

This sequence belongs to the TRAFAC class TrmE-Era-EngA-EngB-Septin-like GTPase superfamily. TrmE GTPase family. Homodimer. Heterotetramer of two MnmE and two MnmG subunits. K(+) serves as cofactor.

The protein resides in the cytoplasm. In terms of biological role, exhibits a very high intrinsic GTPase hydrolysis rate. Involved in the addition of a carboxymethylaminomethyl (cmnm) group at the wobble position (U34) of certain tRNAs, forming tRNA-cmnm(5)s(2)U34. This is tRNA modification GTPase MnmE from Protochlamydia amoebophila (strain UWE25).